A 278-amino-acid polypeptide reads, in one-letter code: MRLDLDFGRGLVAHVMLDNVSEEQYQQISDYFVPLVNKPKLKSRDAIGQAFVMATEVCPDANPSDLWHHVLYRIYIREKIGTDPSQSWVRTSGEAFEVALVERYNPVLARHGIRLTALFKGQKGLALTRMGVADRVGSRKVDVMIEKQGGGRSPDAEGFGVVGGIHAKVSLAERVSDDIPASRIMMGEGLLSVLSTLDVKSFPPPHGDLVNRGELGTPDRPSDKRNYIEGHGDFSACFSYNLRTSPSNATTPSGRHIYVSGFSGQDDEFTDYLVAQLA.

Belongs to the BsaWI type II restriction endonuclease family.

It carries out the reaction Endonucleolytic cleavage of DNA to give specific double-stranded fragments with terminal 5'-phosphates.. Its function is as follows. A P subtype restriction enzyme that recognizes the double-stranded sequence 5'-ACCGGT-3' and cleaves after A-1. This chain is Type II restriction enzyme AgeI (ageIR), found in Thalassovita gelatinovora (Thalassobius gelatinovorus).